A 1462-amino-acid polypeptide reads, in one-letter code: Protein peg1 (1462 aa).

2 disordered regions span residues 528-563 (SFSK…SRER) and 573-592 (FHST…SIAI). Composition is skewed to low complexity over residues 538 to 552 (SSNS…RLGL) and 574 to 589 (HSTS…HSPS). Serine 599 is modified (phosphoserine). The segment at 838–928 (SSTHQEHLSK…NCSEESLDDH (91 aa)) is disordered. A compositionally biased stretch (low complexity) spans 847–866 (KNLPTLNTSSSSNSSQTDLL). The span at 870-896 (GKGETKETEMQSPIESKEGLLSKDTHI) shows a compositional bias: basic and acidic residues. Phosphoserine is present on serine 1221. A coiled-coil region spans residues 1342–1367 (TLIAEIADLQGLYEFTQQRLQSLNTE).

This sequence belongs to the CLASP family. As to quaternary structure, interacts with microtubules. Interacts with dhc1, mal3 and tea1.

The protein localises to the cytoplasm. Its subcellular location is the cytoskeleton. The protein resides in the spindle. It localises to the microtubule organizing center. It is found in the spindle pole body. Microtubule binding protein that regulates the stability of dynamic microtubules. Required for mitotic spindle formation. In Schizosaccharomyces pombe (strain 972 / ATCC 24843) (Fission yeast), this protein is Protein peg1 (peg1).